The following is a 66-amino-acid chain: Large ribosomal subunit protein uL29 (66 aa).

It belongs to the universal ribosomal protein uL29 family.

The sequence is that of Large ribosomal subunit protein uL29 from Thermotoga sp. (strain RQ2).